Here is a 76-residue protein sequence, read N- to C-terminus: Exodeoxyribonuclease 7 small subunit (76 aa).

Belongs to the XseB family. In terms of assembly, heterooligomer composed of large and small subunits.

It localises to the cytoplasm. It carries out the reaction Exonucleolytic cleavage in either 5'- to 3'- or 3'- to 5'-direction to yield nucleoside 5'-phosphates.. Functionally, bidirectionally degrades single-stranded DNA into large acid-insoluble oligonucleotides, which are then degraded further into small acid-soluble oligonucleotides. The protein is Exodeoxyribonuclease 7 small subunit of Geotalea uraniireducens (strain Rf4) (Geobacter uraniireducens).